Consider the following 222-residue polypeptide: 7-cyano-7-deazaguanine synthase (222 aa).

Residue 9–19 coordinates ATP; that stretch reads LSGGLDSATAA. The Zn(2+) site is built by Cys190, Cys198, Cys201, and Cys204.

The protein belongs to the QueC family. The cofactor is Zn(2+).

It catalyses the reaction 7-carboxy-7-deazaguanine + NH4(+) + ATP = 7-cyano-7-deazaguanine + ADP + phosphate + H2O + H(+). Its pathway is purine metabolism; 7-cyano-7-deazaguanine biosynthesis. In terms of biological role, catalyzes the ATP-dependent conversion of 7-carboxy-7-deazaguanine (CDG) to 7-cyano-7-deazaguanine (preQ(0)). The protein is 7-cyano-7-deazaguanine synthase of Synechococcus sp. (strain RCC307).